The following is a 339-amino-acid chain: Ketol-acid reductoisomerase (NADP(+)) (339 aa).

In terms of domain architecture, KARI N-terminal Rossmann spans 1–182 (MRVYYDRDAD…GGGRAGIIET (182 aa)). NADP(+) is bound by residues 24–27 (YGSQ), arginine 48, serine 51, threonine 53, and 83–86 (DELQ). Histidine 108 is an active-site residue. Residue glycine 134 participates in NADP(+) binding. Residues 183 to 328 (TFKEECETDL…AKLRGMMPWI (146 aa)) form the KARI C-terminal knotted domain. Residues aspartate 191, glutamate 195, glutamate 227, and glutamate 231 each contribute to the Mg(2+) site. Position 252 (serine 252) interacts with substrate.

This sequence belongs to the ketol-acid reductoisomerase family. Requires Mg(2+) as cofactor.

The enzyme catalyses (2R)-2,3-dihydroxy-3-methylbutanoate + NADP(+) = (2S)-2-acetolactate + NADPH + H(+). It carries out the reaction (2R,3R)-2,3-dihydroxy-3-methylpentanoate + NADP(+) = (S)-2-ethyl-2-hydroxy-3-oxobutanoate + NADPH + H(+). It functions in the pathway amino-acid biosynthesis; L-isoleucine biosynthesis; L-isoleucine from 2-oxobutanoate: step 2/4. The protein operates within amino-acid biosynthesis; L-valine biosynthesis; L-valine from pyruvate: step 2/4. Its function is as follows. Involved in the biosynthesis of branched-chain amino acids (BCAA). Catalyzes an alkyl-migration followed by a ketol-acid reduction of (S)-2-acetolactate (S2AL) to yield (R)-2,3-dihydroxy-isovalerate. In the isomerase reaction, S2AL is rearranged via a Mg-dependent methyl migration to produce 3-hydroxy-3-methyl-2-ketobutyrate (HMKB). In the reductase reaction, this 2-ketoacid undergoes a metal-dependent reduction by NADPH to yield (R)-2,3-dihydroxy-isovalerate. In Methylorubrum populi (strain ATCC BAA-705 / NCIMB 13946 / BJ001) (Methylobacterium populi), this protein is Ketol-acid reductoisomerase (NADP(+)).